The following is a 155-amino-acid chain: Fibroblast growth factor 1 (155 aa).

At A2 the chain carries N-acetylalanine. The short motif at 24–27 is the Nuclear localization signal element; it reads KKPK. Residues 24-28 and 113-116 contribute to the heparin site; these read KKPKL and ISKK.

The protein belongs to the heparin-binding growth factors family. As to quaternary structure, monomer. Homodimer. Interacts with FGFR1, FGFR2, FGFR3 and FGFR4. Affinity between fibroblast growth factors (FGFs) and their receptors is increased by heparan sulfate glycosaminoglycans that function as coreceptors. Found in a complex with FGFBP1, FGF1 and FGF2. Interacts with FGFBP1. Part of a Cu(2+)-dependent multiprotein aggregate containing FGF1, S100A13 and SYT1. Interacts with S100A13. Interacts with FGFBP1. Interacts with LRRC59. Interacts with CSNKA, CSNKB and FIBP. While binding with LRRC59, CSNKA and FIBP seem mutually exclusive, CSNKB and FIBP may cooperatively interact with FGF1. Interacts with SYT1. Forms a ternary complex with FGFR1 and ITGAV:ITGB3 and induces the recruitment of PTPN11 to the complex. Post-translationally, in the nucleus, phosphorylated by PKC/PRKCD.

Its subcellular location is the secreted. The protein localises to the cytoplasm. It is found in the cell cortex. It localises to the cytosol. The protein resides in the nucleus. In terms of biological role, plays an important role in the regulation of cell survival, cell division, angiogenesis, cell differentiation and cell migration. Functions as a potent mitogen in vitro. Acts as a ligand for FGFR1 and integrins. Binds to FGFR1 in the presence of heparin leading to FGFR1 dimerization and activation via sequential autophosphorylation on tyrosine residues which act as docking sites for interacting proteins, leading to the activation of several signaling cascades. Binds to integrin ITGAV:ITGB3. Its binding to integrin, subsequent ternary complex formation with integrin and FGFR1, and the recruitment of PTPN11 to the complex are essential for FGF1 signaling. Induces the phosphorylation and activation of FGFR1, FRS2, MAPK3/ERK1, MAPK1/ERK2 and AKT1. Can induce angiogenesis. This is Fibroblast growth factor 1 (FGF1) from Bos taurus (Bovine).